Here is a 516-residue protein sequence, read N- to C-terminus: ADP-ribosylation factor GTPase-activating protein 3 (516 aa).

Residues 10 to 126 (LTIFKRLRSV…IKSLASQATR (117 aa)) enclose the Arf-GAP domain. The segment at 25–48 (CFDCGAKNPSWASITYGVFLCIDC) adopts a C4-type zinc-finger fold. The disordered stretch occupies residues 170–199 (AEPSSLTSRPAETTLENNEGGQEQGPCVEG). The span at 173–190 (SSLTSRPAETTLENNEGG) shows a compositional bias: polar residues. Ser231 carries the post-translational modification Phosphoserine. A coiled-coil region spans residues 243–264 (NEIEKQAQAADKMKEQEDLAKA). Residues Ser270, Ser274, Ser331, and Ser370 each carry the phosphoserine modification. The tract at residues 393–417 (TTGYSDRPTARHKPDYEPVENTDEA) is disordered. Ser428, Ser451, Ser453, Ser455, Ser457, and Ser458 each carry phosphoserine.

The protein localises to the cytoplasm. Its subcellular location is the golgi apparatus membrane. Its activity is regulated as follows. GAP activity stimulated by phosphatidylinositol 4,5-bisphosphate (PIP2). Its function is as follows. GTPase-activating protein (GAP) for ADP ribosylation factor 1 (ARF1). Hydrolysis of ARF1-bound GTP may lead to dissociation of coatomer from Golgi-derived membranes to allow fusion with target membranes. The protein is ADP-ribosylation factor GTPase-activating protein 3 of Pongo abelii (Sumatran orangutan).